The chain runs to 218 residues: Large ribosomal subunit protein uL3 (218 aa).

2 disordered regions span residues phenylalanine 128–glycine 167 and serine 199–lysine 218.

Belongs to the universal ribosomal protein uL3 family. Part of the 50S ribosomal subunit. Forms a cluster with proteins L14 and L19.

One of the primary rRNA binding proteins, it binds directly near the 3'-end of the 23S rRNA, where it nucleates assembly of the 50S subunit. The polypeptide is Large ribosomal subunit protein uL3 (Prochlorococcus marinus (strain NATL2A)).